Here is a 299-residue protein sequence, read N- to C-terminus: MSTFSASDFNSERYSSSRPSYPSDFYKMIDEYHDGERKLLVDVGCGPGTATLQMAQELKPFEQIIGSDLSATMIKTAEVIKEGSPDTYKNVSFKISSSDDFKFLGADSVDKQKIDMITAVECAHWFDFEKFQRSAYANLRKDGTIAIWGYADPIFPDYPEFDDLMIEVPYGKQGLGPYWEQPGRSRLRNMLKDSHLDPELFHDIQVSYFCAEDVRDKVKLHQHTKKPLLIRKQVTLMEFADYVRTWSAYHQWKQDPKNKDKEDVADWFIKESLRRRPELSTNTKIEVVWNTFYKLGKRV.

Ser2 carries the post-translational modification N-acetylserine.

Belongs to the methyltransferase superfamily. Tam family.

Its subcellular location is the cytoplasm. The catalysed reaction is trans-aconitate + S-adenosyl-L-methionine = (E)-2-(methoxycarbonylmethyl)but-2-enedioate + S-adenosyl-L-homocysteine. Functionally, catalyzes the S-adenosylmethionine monomethyl esterification of trans-aconitate and 3-isopropylmalate at high affinity and of other molecules like cis-aconitate, isocitrate, and citrate at lower velocities and affinities. The function of trans-aconitate methylation appears to be in reducing the toxicity of this spontaneous breakdown product of cis-aconitate. The role of 3-isopropylmalate methylation is unclear but may represent a metabolic branch at 3-isopropylmalate, where some of the material is taken in the pathway leading to leucine and some is taken in a pathway to the 3-isopropylmalate methyl ester, a molecule that provides a signal to switch from vegetative to invasive growth in response to amino acid starvation. The polypeptide is Trans-aconitate 3-methyltransferase (TMT1) (Saccharomyces cerevisiae (strain YJM789) (Baker's yeast)).